The primary structure comprises 337 residues: Leucine-rich repeat-containing protein 39 (337 aa).

LRR repeat units follow at residues 84–105 (QLQE…IGRF), 107–128 (HLIV…IGLL), 130–152 (RLQE…SNCT), 153–176 (SLEK…SKLL), 177–198 (KLTH…VLDM), 200–221 (ALEW…LDRM), 223–244 (SLHT…IKNM), 246–267 (NLGT…MEEM), and 269–290 (NLRF…PPSD).

As to quaternary structure, interacts with MYH7 (via C-terminus). As to expression, expressed in heart and skeletal muscle.

The protein localises to the cytoplasm. Its subcellular location is the myofibril. It localises to the sarcomere. It is found in the m line. Functionally, component of the sarcomeric M-band which plays a role in myocyte response to biomechanical stress. May regulate expression of other M-band proteins via an SRF-dependent pathway. Important for normal contractile function in heart. The polypeptide is Leucine-rich repeat-containing protein 39 (Mus musculus (Mouse)).